We begin with the raw amino-acid sequence, 994 residues long: ASI1-immunoprecipitated protein 2 (994 aa).

Disordered regions lie at residues 39–182 and 187–206; these read AEFS…SGEN and KADE…NDPE. A compositionally biased stretch (basic and acidic residues) spans 45–54; it reads KSDESSDENS. The span at 60-102 shows a compositional bias: polar residues; the sequence is SQCSFNGDNLLRSSGVNAPGSSHNTSSEASHLVNSNHDTSSEN. Basic and acidic residues-rich tracts occupy residues 119-140 and 148-163; these read LLDR…DHQA and KVKE…EKKN. The segment at 212-263 adopts a PHD-type zinc-finger fold; that stretch reads VKVCDTCGDAGREDLLAICSRCSDGAEHTYCMRVMLKKVPKGYWLCEECKFA. Positions 215, 218, 230, 233, 239, 242, 257, and 260 each coordinate Zn(2+). Disordered stretches follow at residues 342 to 567 and 839 to 875; these read AHYS…NNKG and CSNP…TDRT. A compositionally biased stretch (low complexity) spans 371-384; sequence SFLKSNSFNSLSSR. 2 stretches are compositionally biased toward polar residues: residues 417 to 435 and 449 to 464; these read VGKS…NCND and TEAN…NSSI. Basic and acidic residues-rich tracts occupy residues 469–478, 536–552, and 858–875; these read SPRDLKDLQS, PRSR…KDAV, and DTFR…TDRT.

Component of the ASI1-AIPP1-EDM2 (AAE) RNA regulatory complex composed of at least AIPP1/EDM3, ASI1 and EDM2 and may contain CPL2, AIPP2 and AIPP3/BDT1. Part of the BAH-PHD bivalent histone reader complex that contains AIPP2, PAIPP2 and AIPP3/BDT1; the BAH-PHD module associates with CPL2 to form the BAH-PHD-CPL2 complex (BPC) for transcriptional repression. Binds directly to ASI1, AIPP3/BDT1 and CPL2 but not to PAIPP2. As to expression, expressed ubiquitously.

Its function is as follows. Together with AIPP3/BDT1 and PAIPP2, cooperates to form a BAH-PHD bivalent histone reader complex able to read histone H3 lysine 27 trimethylation (H3K27me3) and low-methylated H3K4 histone marks in order to regulate transcription, especially to prevent early flowering; promotes AIPP3/BDT1 binding to H3K27me3. CPL2 is subsequently recruited to form a BAH-PHD-CPL2 complex (BPC) in order to silence several H3K27me3 and low-methylated H3K4 enriched loci, including AGO5, via the phosphorylation state-dependent inhibition of Pol II release from the transcriptional start site (e.g. Ser5P-Pol II dephosphorylation). The BPC complex represses flowering by inhibiting the expression of several genes, including AGL6, FT, FUL and SOC1. Prevents the accumulation of intronic heterochromatin-containing genes (e.g. IBM1, At3g05410 and RPP7). The protein is ASI1-immunoprecipitated protein 2 of Arabidopsis thaliana (Mouse-ear cress).